Here is a 380-residue protein sequence, read N- to C-terminus: MAREAEKDAAAAAEIPLLTPYKMGRFELSHRVVLAPLTRNRSYGNVPRPHAVLYYTQRATSGGLLVTEATGVSDTAQGYPDTPGIWTQQQVEAWKPIVDAVHRKGALFICQLWHVGRVSTNEYQPDGQAPISSTDRQITPDDSGIVYSKPRRLRTEEIPQIIDDFRRAARNAIEAGFDGVEIHGAHGYLLEQFMKDSANDRSDEYGGSLENRCRFVVEVIDAIVAEVGAHRVGIRLSPFIDYMDCVDSDPVALGSYMVQQLNKHPGFLYCHMVEPRMAIVEGRRKITHGLLPFRKLFNGTFIAAGGYDREEGNKVIADGYADLVAYGRHFLANPDLPKRFAINAPLNKYNRSTFYIQDPVVGYTDYPFLDEKDEGAATYA.

FMN contacts are provided by residues 36-38 (PLT), Ala69, and Gln111. Residue 183–186 (HGAH) participates in substrate binding. The Proton donor role is filled by Tyr188. Arg235 is an FMN binding site. Position 276 (Arg276) interacts with substrate. FMN contacts are provided by residues Gly306 and 327-328 (GR).

This sequence belongs to the NADH:flavin oxidoreductase/NADH oxidase family. It depends on FMN as a cofactor.

Functionally, putative oxophytodienoate reductase that may be involved in the biosynthesis or metabolism of oxylipin signaling molecules. This Oryza sativa subsp. japonica (Rice) protein is Putative 12-oxophytodienoate reductase 4 (OPR4).